Reading from the N-terminus, the 249-residue chain is Metallo-beta-lactamase type 2 (249 aa).

The signal sequence occupies residues 1-22 (MLKKIKISLILALGLTSLQAFG). Zn(2+) is bound by residues histidine 98, histidine 100, aspartate 102, histidine 161, and cysteine 180. Lysine 183 contacts substrate. Histidine 222 is a Zn(2+) binding site.

Belongs to the metallo-beta-lactamase superfamily. Class-B beta-lactamase family. Monomer. It depends on Zn(2+) as a cofactor.

The protein localises to the periplasm. The enzyme catalyses a beta-lactam + H2O = a substituted beta-amino acid. Functionally, confers resistance to the different beta-lactams antibiotics (penicillin, cephalosporin and carbapenem) via the hydrolysis of the beta-lactam ring. This chain is Metallo-beta-lactamase type 2 (blaB2), found in Elizabethkingia meningoseptica (Chryseobacterium meningosepticum).